The chain runs to 200 residues: ATP-dependent Clp protease proteolytic subunit 2 (200 aa).

S96 acts as the Nucleophile in catalysis. H121 is an active-site residue.

Belongs to the peptidase S14 family. As to quaternary structure, fourteen ClpP subunits assemble into 2 heptameric rings which stack back to back to give a disk-like structure with a central cavity, resembling the structure of eukaryotic proteasomes.

It is found in the cytoplasm. It catalyses the reaction Hydrolysis of proteins to small peptides in the presence of ATP and magnesium. alpha-casein is the usual test substrate. In the absence of ATP, only oligopeptides shorter than five residues are hydrolyzed (such as succinyl-Leu-Tyr-|-NHMec, and Leu-Tyr-Leu-|-Tyr-Trp, in which cleavage of the -Tyr-|-Leu- and -Tyr-|-Trp bonds also occurs).. Cleaves peptides in various proteins in a process that requires ATP hydrolysis. Has a chymotrypsin-like activity. Plays a major role in the degradation of misfolded proteins. In Synechococcus sp. (strain JA-2-3B'a(2-13)) (Cyanobacteria bacterium Yellowstone B-Prime), this protein is ATP-dependent Clp protease proteolytic subunit 2.